Reading from the N-terminus, the 474-residue chain is Protein Rv3254 (474 aa).

Residues 1–4 constitute a propeptide that is removed on maturation; it reads MTGR.

In Mycobacterium tuberculosis (strain ATCC 25618 / H37Rv), this protein is Protein Rv3254.